The sequence spans 413 residues: Low-salt glycan biosynthesis hexosyltransferase Agl6 (413 aa).

Residues 1–27 (MSTRSQSESPVDAPQQGATNGQSASDI) form a disordered region. A compositionally biased stretch (polar residues) spans 16-25 (QGATNGQSAS). The next 4 membrane-spanning stretches (helical) occupy residues 270-290 (LFSA…VLAW), 304-324 (TGIG…FGAF), 355-375 (IGSV…FTWV), and 389-409 (VVAT…FLLG).

It belongs to the glycosyltransferase 2 family.

It localises to the membrane. Its pathway is protein modification; protein glycosylation. It participates in cell surface structure biogenesis; S-layer biogenesis. In terms of biological role, hexosyltransferase involved in N-glycan biosynthetic pathway that takes place under low-salt conditions (1.75 M instead of 3.4 M). Participates in the formation of the tetrasaccharide present at 'Asn-532' of S-layer glycoprotein Csg, consisting of a sulfated hexose, 2 hexoses and rhamnose. Together with Agl5, mediates the addition of sugars 1 and 2 to dolichol phosphate in the tetrasaccharide. The protein is Low-salt glycan biosynthesis hexosyltransferase Agl6 (agl6) of Haloferax volcanii (strain ATCC 29605 / DSM 3757 / JCM 8879 / NBRC 14742 / NCIMB 2012 / VKM B-1768 / DS2) (Halobacterium volcanii).